A 331-amino-acid chain; its full sequence is ADP,ATP carrier protein 2, mitochondrial (331 aa).

3 Solcar repeats span residues 29–122, 134–226, and 238–320; these read KNFA…FKRM, KWFG…LKPV, and ASFA…LQIL. The next 5 membrane-spanning stretches (helical) occupy residues 31 to 58, 99 to 123, 132 to 152, 202 to 223, and 237 to 257; these read FAID…VKLL, TANV…KRMF, YWKW…SSLF, FNIS…YDSL, and FASF…SYPI. The ADP site is built by arginine 104 and lysine 116. Arginine 261 contacts ADP. An important for transport activity region spans residues 261–266; that stretch reads RRRMMM. Residues 261 to 266 carry the Nucleotide carrier signature motif motif; the sequence is RRRMMM. The helical transmembrane segment at 297–317 threads the bilayer; it reads AGANILRAIAGAGVLSGYDQL.

Belongs to the mitochondrial carrier (TC 2.A.29) family. In terms of assembly, monomer.

It is found in the mitochondrion inner membrane. It catalyses the reaction ADP(in) + ATP(out) = ADP(out) + ATP(in). The matrix-open state (m-state) is inhibited by the membrane-permeable bongkrekic acid (BKA). The cytoplasmic-open state (c-state) is inhibited by the membrane-impermeable toxic inhibitor carboxyatractyloside (CATR). Its function is as follows. ADP:ATP antiporter that mediates import of ADP into the mitochondrial matrix for ATP synthesis, and export of ATP out to fuel the cell. Cycles between the cytoplasmic-open state (c-state) and the matrix-open state (m-state): operates by the alternating access mechanism with a single substrate-binding site intermittently exposed to either the cytosolic (c-state) or matrix (m-state) side of the inner mitochondrial membrane. This chain is ADP,ATP carrier protein 2, mitochondrial (ANT-G2), found in Triticum aestivum (Wheat).